The primary structure comprises 518 residues: D-aminopeptidase (518 aa).

S62 (nucleophile) is an active-site residue. K65 functions as the Proton donor/acceptor in the catalytic mechanism. An important for specificity region spans residues 477–487; sequence QRSMDAPSPGE. D481 is a substrate binding site.

Belongs to the peptidase S12 family. As to quaternary structure, homodimer.

It carries out the reaction Release of an N-terminal D-amino acid from a peptide, Xaa-|-Yaa-, in which Xaa is preferably D-Ala, D-Ser or D-Thr. D-amino acid amides and methyl esters also are hydrolyzed, as is glycine amide.. Its activity is regulated as follows. Inhibited by beta-lactam compounds such as 6-aminopenicillic acid, 7-aminocephalosporanic acid, benzylpenicillin and ampicillin. Inhibited by p-chloromercuribenzoate. In terms of biological role, hydrolyzes N-terminal residues in D-amino acid-containing peptides. The chain is D-aminopeptidase from Brucella ovis (strain ATCC 25840 / 63/290 / NCTC 10512).